The chain runs to 683 residues: DNA ligase (683 aa).

NAD(+) contacts are provided by residues 35-39, 81-82, and glutamate 112; these read DAEYD and SL. Residue lysine 114 is the N6-AMP-lysine intermediate of the active site. Positions 135, 170, 277, and 301 each coordinate NAD(+). Cysteine 395, cysteine 398, cysteine 411, and cysteine 417 together coordinate Zn(2+). The BRCT domain occupies 601-683; that stretch reads SSNSVLNNKV…YRMINSEVSE (83 aa).

Belongs to the NAD-dependent DNA ligase family. LigA subfamily. It depends on Mg(2+) as a cofactor. Mn(2+) serves as cofactor.

It carries out the reaction NAD(+) + (deoxyribonucleotide)n-3'-hydroxyl + 5'-phospho-(deoxyribonucleotide)m = (deoxyribonucleotide)n+m + AMP + beta-nicotinamide D-nucleotide.. In terms of biological role, DNA ligase that catalyzes the formation of phosphodiester linkages between 5'-phosphoryl and 3'-hydroxyl groups in double-stranded DNA using NAD as a coenzyme and as the energy source for the reaction. It is essential for DNA replication and repair of damaged DNA. The polypeptide is DNA ligase (Wolbachia sp. subsp. Brugia malayi (strain TRS)).